The following is a 219-amino-acid chain: Ribose-5-phosphate isomerase A (219 aa).

Residues 28–31 (TGST), 81–84 (DGAD), and 94–97 (KGGG) contribute to the substrate site. Glu-103 acts as the Proton acceptor in catalysis. Lys-121 is a binding site for substrate.

The protein belongs to the ribose 5-phosphate isomerase family. In terms of assembly, homodimer.

It carries out the reaction aldehydo-D-ribose 5-phosphate = D-ribulose 5-phosphate. The protein operates within carbohydrate degradation; pentose phosphate pathway; D-ribose 5-phosphate from D-ribulose 5-phosphate (non-oxidative stage): step 1/1. Catalyzes the reversible conversion of ribose-5-phosphate to ribulose 5-phosphate. The chain is Ribose-5-phosphate isomerase A from Methylibium petroleiphilum (strain ATCC BAA-1232 / LMG 22953 / PM1).